Here is a 294-residue protein sequence, read N- to C-terminus: Protoheme IX farnesyltransferase (294 aa).

The next 9 helical transmembrane spans lie at 13-33 (IIFG…KGVI), 35-55 (YPLF…GCVF), 84-104 (ISLI…YAAA), 107-127 (LAMQ…SLYM), 132-152 (VYGT…GYCA), 162-182 (LILL…IAIF), 208-228 (IILY…SGYA), 229-249 (GYKY…MALS), and 264-284 (FIFS…DPHV).

The protein belongs to the UbiA prenyltransferase family. Protoheme IX farnesyltransferase subfamily.

Its subcellular location is the cell inner membrane. It carries out the reaction heme b + (2E,6E)-farnesyl diphosphate + H2O = Fe(II)-heme o + diphosphate. Its pathway is porphyrin-containing compound metabolism; heme O biosynthesis; heme O from protoheme: step 1/1. In terms of biological role, converts heme B (protoheme IX) to heme O by substitution of the vinyl group on carbon 2 of heme B porphyrin ring with a hydroxyethyl farnesyl side group. In Photorhabdus laumondii subsp. laumondii (strain DSM 15139 / CIP 105565 / TT01) (Photorhabdus luminescens subsp. laumondii), this protein is Protoheme IX farnesyltransferase.